Here is an 87-residue protein sequence, read N- to C-terminus: Phosphoribosyl-ATP pyrophosphatase (87 aa).

Belongs to the PRA-PH family.

Its subcellular location is the cytoplasm. The enzyme catalyses 1-(5-phospho-beta-D-ribosyl)-ATP + H2O = 1-(5-phospho-beta-D-ribosyl)-5'-AMP + diphosphate + H(+). Its pathway is amino-acid biosynthesis; L-histidine biosynthesis; L-histidine from 5-phospho-alpha-D-ribose 1-diphosphate: step 2/9. The polypeptide is Phosphoribosyl-ATP pyrophosphatase (Bifidobacterium longum (strain DJO10A)).